Consider the following 433-residue polypeptide: Alpha-(1-&gt;3)-arabinofuranosyltransferase (433 aa).

Helical transmembrane passes span 118–138 (LFIS…LRMF), 140–160 (FTLT…TETV), 164–184 (LVFT…LRWL), 197–217 (LAIG…LLPL), 224–244 (ALVA…PLVS), 280–300 (WLIL…LWLL), 310–330 (LFWF…VMSL), 333–353 (GYYS…NSVI), 356–376 (WPAW…LFNW), and 385–405 (YLKI…VLYF).

This sequence belongs to the glycosyltransferase 87 family.

The protein resides in the cell membrane. The catalysed reaction is Adds an alpha-D-arabinofuranosyl group from trans,octacis-decaprenylphospho-beta-D-arabinofuranose at the 3-O-position of an alpha-(1-&gt;5)-arabinofuranan chain attached to a beta-(1-&gt;5)-galactofuranan chain.. It participates in cell wall biogenesis; cell wall polysaccharide biosynthesis. In terms of biological role, involved in the biosynthesis of the arabinogalactan (AG) region of the mycolylarabinogalactan-peptidoglycan (mAGP) complex, an essential component of the mycobacterial cell wall. Catalyzes the addition of an arabinofuranosyl (Araf) residue from the sugar donor beta-D-arabinofuranosyl-1-monophosphoryldecaprenol (DPA) on the C-3 of an alpha-(1-&gt;5)-linked Araf from the arabinan backbone of AG. This Mycobacterium tuberculosis (strain CDC 1551 / Oshkosh) protein is Alpha-(1-&gt;3)-arabinofuranosyltransferase (aftC).